The following is a 670-amino-acid chain: Methionine--tRNA ligase (670 aa).

The 'HIGH' region signature appears at 14 to 24; the sequence is PYANGHLHLGH. Zn(2+) is bound by residues Cys-145, Cys-148, Cys-158, and Cys-161. A 'KMSKS' region motif is present at residues 330-334; the sequence is KMSKS. An ATP-binding site is contributed by Lys-333. The tRNA-binding domain occupies 570–670; it reads DFAKVDLRIA…AGALPGMKVK (101 aa).

This sequence belongs to the class-I aminoacyl-tRNA synthetase family. MetG type 1 subfamily. As to quaternary structure, homodimer. It depends on Zn(2+) as a cofactor.

The protein localises to the cytoplasm. It catalyses the reaction tRNA(Met) + L-methionine + ATP = L-methionyl-tRNA(Met) + AMP + diphosphate. Is required not only for elongation of protein synthesis but also for the initiation of all mRNA translation through initiator tRNA(fMet) aminoacylation. The chain is Methionine--tRNA ligase from Legionella pneumophila subsp. pneumophila (strain Philadelphia 1 / ATCC 33152 / DSM 7513).